We begin with the raw amino-acid sequence, 356 residues long: Pavine N-methyltransferase (356 aa).

Positions 96, 97, 135, 159, 163, 185, 186, and 201 each coordinate S-adenosyl-L-homocysteine. S-adenosyl-L-methionine contacts are provided by phenylalanine 96, serine 97, glycine 135, asparagine 159, glutamine 163, aspartate 185, valine 186, and valine 201. Residue glutamate 205 participates in (S)-tetrahydropapaverine binding. Residue cysteine 331 is part of the active site.

Belongs to the CFA/CMAS family. Homodimer.

The protein resides in the cytoplasm. It carries out the reaction (+-)-pavine + S-adenosyl-L-methionine = N-methylpavine + S-adenosyl-L-homocysteine + H(+). The enzyme catalyses (S)-reticuline + S-adenosyl-L-methionine = (S)-tembetarine + S-adenosyl-L-homocysteine + H(+). It catalyses the reaction (S)-stylopine + S-adenosyl-L-methionine = (S)-cis-N-methylstylopine + S-adenosyl-L-homocysteine. The catalysed reaction is (S)-scoulerine + S-adenosyl-L-methionine = (S)-cis-N-methylscoulerine + S-adenosyl-L-homocysteine. It carries out the reaction (S)-tetrahydropapaverine + S-adenosyl-L-methionine = (S)-N-methyltetrahydropapaverine + S-adenosyl-L-homocysteine + H(+). The enzyme catalyses (S)-tetrahydropalmatine + S-adenosyl-L-methionine = (S)-cis-N-methyltetrahydropalmatine + S-adenosyl-L-homocysteine. It participates in alkaloid biosynthesis. With respect to regulation, in the presence of a racemic mixture of tetrahydropapaverine (THP), one molecule of (S)-THP binds in a productive mode, while one molecule of (R)-THP is bound next to it in a non-productive mode. The (R)-THP seems to inhibit the release of products from the enzyme when higher concentrations of the racemic substrate are added to the reaction. Functionally, N-methyltransferase with a substrate preference for (+-)-pavine and (S)-reticuline, but also active with the protoberberines scoulerine and stylopine and, to a lesser extent, tetrahydropapaverine (THP) and tetrahydropalmatine. Is not active on (R)-reticuline, cryptopine, glaucine, codeine, canadaline, noscapine and berbamine. The protein is Pavine N-methyltransferase of Thalictrum flavum subsp. glaucum (Yellow meadow rue).